The primary structure comprises 62 residues: Conotoxin TsMLCL-02 (62 aa).

The N-terminal stretch at 1 to 19 is a signal peptide; that stretch reads MLCLPVFIILLLLASPAAP. A propeptide spanning residues 20 to 54 is cleaved from the precursor; it reads NPLERRIQSDLIRAALEDADMKTEKGILSSIMGTL.

It belongs to the conotoxin T superfamily. As to expression, expressed by the venom duct.

It localises to the secreted. The chain is Conotoxin TsMLCL-02 from Conus tessulatus (Tessellate cone).